The following is a 954-amino-acid chain: Valine--tRNA ligase (954 aa).

The 'HIGH' region signature appears at 48-58; sequence PNVTGSLHMGH. Positions 560 to 564 match the 'KMSKS' region motif; sequence KMSKS. ATP is bound at residue Lys-563. Residues 883–954 are a coiled coil; it reads AGFINKEAEL…QTQYQAIENL (72 aa).

The protein belongs to the class-I aminoacyl-tRNA synthetase family. ValS type 1 subfamily. In terms of assembly, monomer.

It is found in the cytoplasm. The catalysed reaction is tRNA(Val) + L-valine + ATP = L-valyl-tRNA(Val) + AMP + diphosphate. Functionally, catalyzes the attachment of valine to tRNA(Val). As ValRS can inadvertently accommodate and process structurally similar amino acids such as threonine, to avoid such errors, it has a 'posttransfer' editing activity that hydrolyzes mischarged Thr-tRNA(Val) in a tRNA-dependent manner. This is Valine--tRNA ligase from Actinobacillus pleuropneumoniae serotype 5b (strain L20).